A 120-amino-acid chain; its full sequence is Methylglyoxal synthase (120 aa).

The MGS-like domain maps to 1–120 (MRIALIAHDN…TAEILVESVL (120 aa)). Substrate contacts are provided by residues His-8, Lys-12, and 54-55 (SG). Residue Asp-60 is the Proton donor/acceptor of the active site. His-87 serves as a coordination point for substrate.

This sequence belongs to the methylglyoxal synthase family.

It catalyses the reaction dihydroxyacetone phosphate = methylglyoxal + phosphate. Its function is as follows. Catalyzes the formation of methylglyoxal from dihydroxyacetone phosphate. This chain is Methylglyoxal synthase, found in Natranaerobius thermophilus (strain ATCC BAA-1301 / DSM 18059 / JW/NM-WN-LF).